The sequence spans 306 residues: UDP-N-acetylenolpyruvoylglucosamine reductase (306 aa).

Residues 25–188 enclose the FAD-binding PCMH-type domain; the sequence is RVGGPADWLF…IEARFRAEPG (164 aa). Arg168 is an active-site residue. Residues 199–214 are compositionally biased toward basic and acidic residues; that stretch reads EQLARRDASQPTKDRS. Residues 199–232 form a disordered region; the sequence is EQLARRDASQPTKDRSAGSTFRNPAGYSSTGRAD. Polar residues predominate over residues 215–229; it reads AGSTFRNPAGYSSTG. Ser217 serves as the catalytic Proton donor. Glu299 is an active-site residue.

It belongs to the MurB family. It depends on FAD as a cofactor.

It is found in the cytoplasm. The catalysed reaction is UDP-N-acetyl-alpha-D-muramate + NADP(+) = UDP-N-acetyl-3-O-(1-carboxyvinyl)-alpha-D-glucosamine + NADPH + H(+). It functions in the pathway cell wall biogenesis; peptidoglycan biosynthesis. Cell wall formation. The sequence is that of UDP-N-acetylenolpyruvoylglucosamine reductase from Paracoccus denitrificans (strain Pd 1222).